Here is a 458-residue protein sequence, read N- to C-terminus: RuvB-like helicase 1 (458 aa).

Residue 71-78 participates in ATP binding; the sequence is GGPGTGKT.

The protein belongs to the RuvB family. May form heterododecamers with hel-2/rvb2. Component of the SWR1 chromatin remodeling complex, the INO80 chromatin remodeling complex, and of the R2TP complex.

The protein resides in the nucleus. It carries out the reaction ATP + H2O = ADP + phosphate + H(+). Its function is as follows. DNA helicase which participates in several chromatin remodeling complexes, including the SWR1 and the INO80 complexes. The SWR1 complex mediates the ATP-dependent exchange of histone H2A for the H2A variant H2A.Z leading to transcriptional regulation of selected genes by chromatin remodeling. The INO80 complex remodels chromatin by shifting nucleosomes and is involved in DNA repair. Also involved in pre-rRNA processing. The protein is RuvB-like helicase 1 (hel-1) of Neurospora crassa (strain ATCC 24698 / 74-OR23-1A / CBS 708.71 / DSM 1257 / FGSC 987).